Consider the following 239-residue polypeptide: Succinate dehydrogenase [ubiquinone] iron-sulfur subunit (239 aa).

In terms of domain architecture, 2Fe-2S ferredoxin-type spans 24-99; the sequence is AEAKFSVHPI…NANIITIYPL (76 aa). [2Fe-2S] cluster-binding residues include cysteine 63, cysteine 68, cysteine 71, and cysteine 83. Residues 142-172 enclose the 4Fe-4S ferredoxin-type domain; that stretch reads DRSELNGIYECILCACCSASCPSYWWNHDKY. Residues cysteine 152, cysteine 155, and cysteine 158 each coordinate [4Fe-4S] cluster. Cysteine 162 is a binding site for [3Fe-4S] cluster. Tryptophan 167 is a binding site for a ubiquinone. Residues cysteine 209 and cysteine 215 each contribute to the [3Fe-4S] cluster site. Cysteine 219 lines the [4Fe-4S] cluster pocket.

It belongs to the succinate dehydrogenase/fumarate reductase iron-sulfur protein family. In terms of assembly, component of complex II composed of four subunits: a flavoprotein (FP), an iron-sulfur protein (IP), and a cytochrome b composed of a large and a small subunit. [2Fe-2S] cluster serves as cofactor. Requires [3Fe-4S] cluster as cofactor. The cofactor is [4Fe-4S] cluster.

Its subcellular location is the mitochondrion inner membrane. The enzyme catalyses a quinone + succinate = fumarate + a quinol. The protein operates within carbohydrate metabolism; tricarboxylic acid cycle; fumarate from succinate (eukaryal route): step 1/1. In terms of biological role, iron-sulfur protein (IP) subunit of succinate dehydrogenase (SDH) that is involved in complex II of the mitochondrial electron transport chain and is responsible for transferring electrons from succinate to ubiquinone (coenzyme Q). In Porphyra purpurea (Red seaweed), this protein is Succinate dehydrogenase [ubiquinone] iron-sulfur subunit (SDH2).